The sequence spans 384 residues: Cytochrome b (384 aa).

The next 4 helical transmembrane spans lie at 32-52 (FGSL…FLSM), 75-96 (FLLR…YFHI), 111-131 (WRVG…GYVL), and 176-196 (FFSL…VHLI). Heme b is bound by residues His81 and His95. His180 and His194 together coordinate heme b. His199 contributes to the a ubiquinone binding site. The next 4 helical transmembrane spans lie at 224 to 244 (SKDW…VYLM), 286 to 306 (FGGV…PLLH), 318 to 338 (FGRM…WIGS), and 345 to 366 (FIII…LIPL).

The protein belongs to the cytochrome b family. In terms of assembly, the main subunits of complex b-c1 are: cytochrome b, cytochrome c1 and the Rieske protein. It depends on heme b as a cofactor.

It localises to the mitochondrion inner membrane. Its function is as follows. Component of the ubiquinol-cytochrome c reductase complex (complex III or cytochrome b-c1 complex) that is part of the mitochondrial respiratory chain. The b-c1 complex mediates electron transfer from ubiquinol to cytochrome c. Contributes to the generation of a proton gradient across the mitochondrial membrane that is then used for ATP synthesis. This Acropora tenuis (Purple tipped acropora) protein is Cytochrome b (MT-CYB).